A 229-amino-acid polypeptide reads, in one-letter code: NAD(P)H-hydrate epimerase (229 aa).

A YjeF N-terminal domain is found at A10–L217. N60–D64 contributes to the (6S)-NADPHX binding site. The K(+) site is built by N61 and D125. Residues G129–P135 and D158 each bind (6S)-NADPHX. A K(+)-binding site is contributed by S161.

The protein belongs to the NnrE/AIBP family. The cofactor is K(+).

The enzyme catalyses (6R)-NADHX = (6S)-NADHX. The catalysed reaction is (6R)-NADPHX = (6S)-NADPHX. Catalyzes the epimerization of the S- and R-forms of NAD(P)HX, a damaged form of NAD(P)H that is a result of enzymatic or heat-dependent hydration. This is a prerequisite for the S-specific NAD(P)H-hydrate dehydratase to allow the repair of both epimers of NAD(P)HX. The sequence is that of NAD(P)H-hydrate epimerase from Drosophila mojavensis (Fruit fly).